The sequence spans 84 residues: CDC42 small effector protein 2-A (84 aa).

Residues C10 and C11 are each lipidated (S-palmitoyl cysteine). The CRIB domain maps to I29 to G42.

This sequence belongs to the CDC42SE/SPEC family.

Its subcellular location is the cytoplasm. It localises to the cytoskeleton. The protein localises to the cell membrane. Functionally, probably involved in the organization of the actin cytoskeleton by acting downstream of CDC42, inducing actin filament assembly. This is CDC42 small effector protein 2-A (cdc42se2-A) from Xenopus tropicalis (Western clawed frog).